The primary structure comprises 577 residues: MGVQLRLNPCSSSSAATSPSTFHNGTPYFCKKFNFLPFRTQPLNWVSGIYSRIQPRKHFEVFSSNGFPLNAVSVQDVQVPLTELGSGDTTVSITVIGASGDLAKKKILPALFALFYEDCLPENFVVFGYSRTKLSDEELRNMISTTLTCRIDKRENCDAKMEHFLERCFYHSGQYNSEDDFAELDYKLKEKEGCRVSNRLFYLSIPPNIFVDVVRCASLKASSTSGWTRVIVEKPFGRDLESSSELTRSLKKYLTEEQIFRIDHYLGKELVENLSVLRFSNLVFEPLWSRNYIRNVQFIFSEDFGTEGRGGYFDHYGIIRDIMQNHLLQILALFAMETPVSLDAEDIRNEKVKVLRSMRPLQLEDVVLGQYKGHSNGAKSYPAYTDDPTVPNGSITPTFSAAALFIDNARWDGVPFLMKAGKALHTKRAEIRVQFRHVPGNLYKRNFGTDMDKATNELVLRLQPDEAIYLKINNKVPGLGMRLDRSDLNLLYKAKYRGEIPDAYERLLLDAIEGERRLFIRSDELDAAWALFTPLLKELEEKKIAPELYPYGSRGPVGAHYLAAKHNVRWGDLSGDD.

The interval 1–20 (MGVQLRLNPCSSSSAATSPS) is disordered. The transit peptide at 1–63 (MGVQLRLNPC…QPRKHFEVFS (63 aa)) directs the protein to the chloroplast. A compositionally biased stretch (low complexity) spans 11-20 (SSSSAATSPS). Residues 97-104 (GASGDLAK) and Arg131 contribute to the NADP(+) site. Cys149 and Cys157 are disulfide-bonded. An NADP(+)-binding site is contributed by Lys234. Residues Lys234, 264-268 (HYLGK), Glu302, and Asp321 contribute to the D-glucose 6-phosphate site. His326 functions as the Proton acceptor in the catalytic mechanism. Lys419 contacts NADP(+). Lys422 and Lys427 together coordinate D-glucose 6-phosphate. 3 residues coordinate NADP(+): Arg428, Arg432, and Arg461. Gln463 provides a ligand contact to D-glucose 6-phosphate. NADP(+) contacts are provided by residues 469-471 (YLK) and Arg554.

The protein belongs to the glucose-6-phosphate dehydrogenase family. Homodimer. In terms of tissue distribution, green tissues, leaves and chloroplasts.

The protein resides in the plastid. It is found in the chloroplast. It catalyses the reaction D-glucose 6-phosphate + NADP(+) = 6-phospho-D-glucono-1,5-lactone + NADPH + H(+). It functions in the pathway carbohydrate degradation; pentose phosphate pathway; D-ribulose 5-phosphate from D-glucose 6-phosphate (oxidative stage): step 1/3. Its activity is regulated as follows. Regulated by metabolites. Post-translationally inactivated by cysteine-mediated redox modification via the ferredoxin-thioredoxin system in the light and this avoids futile cycles with photosynthetic CO2 fixation. In terms of biological role, catalyzes the rate-limiting step of the oxidative pentose-phosphate pathway, which represents a route for the dissimilation of carbohydrates besides glycolysis. The main function of this enzyme is to provide reducing power (NADPH) and pentose phosphates for fatty acid and nucleic acid synthesis which are involved in membrane synthesis and cell division. The sequence is that of Glucose-6-phosphate 1-dehydrogenase, chloroplastic from Solanum tuberosum (Potato).